The primary structure comprises 58 residues: ComX pheromone (58 aa).

Residues 1-52 (MKQDMIDYLMKNPQVLTKLENGEASLIGIPDKLIPSIVDIFNKKMTLSKKCK) constitute a propeptide that is removed on maturation. The 3'-geranyl-2',N2-cyclotryptophan; in strain RO-E-2 /NRRL B-23055 moiety is linked to residue Trp56.

As to quaternary structure, interacts directly with the sensor histidine kinase ComP and stimulates its activity. Post-translationally, trp-56 is modified by geranylation, which is essential for activity. Modified by the tryptophan prenyltransferase ComQ before export to the extracellular environment. The type of isoprenyl derivative differs among the different pherotypes and depends on ComX primary sequence.

The protein resides in the secreted. Functionally, part of a major quorum-sensing system that regulates the development of genetic competence. Acts through the activation of the two-component regulatory system ComP/ComA composed of a sensor histidine kinase, ComP, and a response regulator, ComA. The sequence is that of ComX pheromone from Bacillus spizizenii (Bacillus subtilis subsp. spizizenii).